The chain runs to 219 residues: Apoptosis regulator OPG045 (219 aa).

The protein belongs to the orthopoxvirus OPG045 family. As to quaternary structure, homodimer. Interacts with host pro-apoptotic protein BCL2L11 (via BH3 domain). Interacts with host NLRP1. Interacts with host BAK.

Its subcellular location is the host mitochondrion outer membrane. The protein localises to the host cytoplasm. Functionally, plays a role in evading host innate immune response by inhibiting host inflammasome activation. Interacts with and inhibits NLR-mediated interleukin-1 beta/IL1B production in infected cells. At the host mitochondria outer membrane, interacts with the BH3 domain of host BAK and prevents BAK from binding active BAX. In turn, host apoptosis is inhibited. The polypeptide is Apoptosis regulator OPG045 (OPG045) (Cynomys gunnisoni (Gunnison's prairie dog)).